Reading from the N-terminus, the 63-residue chain is Cecropin-B (63 aa).

The first 22 residues, 1–22 (MNFAKILSFVFALVLALSMTSA), serve as a signal peptide directing secretion. A propeptide spans 23–26 (APEP) (removed by a dipeptidylpeptidase). A 5-hydroxylysine; partial modification is found at lysine 47. An Isoleucine amide modification is found at isoleucine 61.

This sequence belongs to the cecropin family. In terms of processing, lepidopteran-B differs from lepidopteran-A by its hydroxylated residue. As to expression, highest expression in fat body and hemocytes. Is also expressed in Malpighian tubules and to a much lesser extent in midgut. Not present in silk gland.

The protein localises to the secreted. Functionally, cecropins have lytic and antibacterial activity against several Gram-positive and Gram-negative bacteria. This Bombyx mori (Silk moth) protein is Cecropin-B (CECB1).